Here is a 599-residue protein sequence, read N- to C-terminus: Aspartate--tRNA ligase (599 aa).

L-aspartate is bound at residue Glu-180. The interval 204 to 207 (QIFK) is aspartate. Residue Arg-226 participates in L-aspartate binding. ATP is bound by residues 226-228 (RDE) and Gln-235. His-454 is an L-aspartate binding site. An ATP-binding site is contributed by Glu-488. Arg-495 serves as a coordination point for L-aspartate. Position 540–543 (540–543 (GLDR)) interacts with ATP.

Belongs to the class-II aminoacyl-tRNA synthetase family. Type 1 subfamily. Homodimer.

The protein resides in the cytoplasm. The enzyme catalyses tRNA(Asp) + L-aspartate + ATP = L-aspartyl-tRNA(Asp) + AMP + diphosphate. In terms of biological role, catalyzes the attachment of L-aspartate to tRNA(Asp) in a two-step reaction: L-aspartate is first activated by ATP to form Asp-AMP and then transferred to the acceptor end of tRNA(Asp). This chain is Aspartate--tRNA ligase, found in Clostridium beijerinckii (strain ATCC 51743 / NCIMB 8052) (Clostridium acetobutylicum).